The sequence spans 84 residues: MYB-like transcription factor TCL1 (84 aa).

The Myb-like domain maps to 36–73; that stretch reads TEQEEDLIFRMYRLVGDRWDLIARRVVGREAKEIERYW.

As to expression, expressed in inflorescences and trichomes of rosette and cauline leaves.

It localises to the nucleus. MYB-type transcription factor involved in trichome cell specification. Acts as a negative regulator of trichome patterning and formation by direct binding to the cis-acting regulatory elements of GL1, thus suppressing the expression of GL1. This Arabidopsis thaliana (Mouse-ear cress) protein is MYB-like transcription factor TCL1 (TCL1).